Consider the following 83-residue polypeptide: Alpha-neurotoxin NTX-4 (83 aa).

Residues 1-21 form the signal peptide; the sequence is MKTLLLTLLVVTIVCLDLGYT. Intrachain disulfides connect Cys24–Cys45, Cys38–Cys62, Cys64–Cys75, and Cys76–Cys81.

This sequence belongs to the three-finger toxin family. Short-chain subfamily. Type I alpha-neurotoxin sub-subfamily. In terms of tissue distribution, expressed by the venom gland.

It localises to the secreted. Binds to muscle nicotinic acetylcholine receptor (nAChR) and inhibit acetylcholine from binding to the receptor, thereby impairing neuromuscular transmission. This chain is Alpha-neurotoxin NTX-4, found in Naja sputatrix (Malayan spitting cobra).